Reading from the N-terminus, the 342-residue chain is MLSDLMINRDFLAYTLANPNQLPAAYDFMLADHTRVDVWDTGVIVFTPANATKDIVLSCAVHGNETAPIEICNQLIKDLLSQRIIAKQRVMFLIGNPTAILNKTRFIDENMNRLFSGAHSKGEGLSHPERHRAKALEQYVADFFNANSDNQRIHYDLHTAIRASKHEKFAIYPYRPGRAFSGEQIMFLAACGVDTMLFHHEPTTTFSYYSSQQFQADAFTVELGKVMPFGQNDMSRFAQTHTMLEKLITETKLAPVEFDPSKVNLYKVSRSINKHFDDFEFSFAGDAENFSAFSQGEVLATEGGNAIIVEYPQEAIVFPNANVPIGQRTVLCLVPAPNESIL.

Zn(2+)-binding residues include H62, E65, and H158. The active site involves E222.

Belongs to the AspA/AstE family. Succinylglutamate desuccinylase subfamily. It depends on Zn(2+) as a cofactor.

It carries out the reaction N-succinyl-L-glutamate + H2O = L-glutamate + succinate. It functions in the pathway amino-acid degradation; L-arginine degradation via AST pathway; L-glutamate and succinate from L-arginine: step 5/5. Transforms N(2)-succinylglutamate into succinate and glutamate. The chain is Succinylglutamate desuccinylase from Shewanella frigidimarina (strain NCIMB 400).